The primary structure comprises 157 residues: SsrA-binding protein (157 aa).

Belongs to the SmpB family.

Its subcellular location is the cytoplasm. Required for rescue of stalled ribosomes mediated by trans-translation. Binds to transfer-messenger RNA (tmRNA), required for stable association of tmRNA with ribosomes. tmRNA and SmpB together mimic tRNA shape, replacing the anticodon stem-loop with SmpB. tmRNA is encoded by the ssrA gene; the 2 termini fold to resemble tRNA(Ala) and it encodes a 'tag peptide', a short internal open reading frame. During trans-translation Ala-aminoacylated tmRNA acts like a tRNA, entering the A-site of stalled ribosomes, displacing the stalled mRNA. The ribosome then switches to translate the ORF on the tmRNA; the nascent peptide is terminated with the 'tag peptide' encoded by the tmRNA and targeted for degradation. The ribosome is freed to recommence translation, which seems to be the essential function of trans-translation. This is SsrA-binding protein from Christiangramia forsetii (strain DSM 17595 / CGMCC 1.15422 / KT0803) (Gramella forsetii).